The primary structure comprises 449 residues: Exodeoxyribonuclease 7 large subunit (449 aa).

Belongs to the XseA family. Heterooligomer composed of large and small subunits.

The protein localises to the cytoplasm. The catalysed reaction is Exonucleolytic cleavage in either 5'- to 3'- or 3'- to 5'-direction to yield nucleoside 5'-phosphates.. Its function is as follows. Bidirectionally degrades single-stranded DNA into large acid-insoluble oligonucleotides, which are then degraded further into small acid-soluble oligonucleotides. The sequence is that of Exodeoxyribonuclease 7 large subunit from Salmonella paratyphi B (strain ATCC BAA-1250 / SPB7).